The primary structure comprises 516 residues: Nucleolar complex protein 4 homolog (516 aa).

The next 3 helical transmembrane spans lie at 296–316, 347–367, and 375–395; these read SACDVGGAISLLALNGLFILI, FFHLADLFLSSSHLPAYLVAA, and LALTAPPEALLMVLPLICNLL.

The protein belongs to the CBF/MAK21 family.

The protein localises to the nucleus membrane. The protein resides in the nucleus. It localises to the nucleolus. The polypeptide is Nucleolar complex protein 4 homolog (Noc4l) (Mus musculus (Mouse)).